The primary structure comprises 210 residues: V-type sodium ATPase subunit D (210 aa).

It belongs to the V-ATPase D subunit family.

Involved in ATP-driven sodium extrusion. The polypeptide is V-type sodium ATPase subunit D (ntpD) (Enterococcus hirae (strain ATCC 9790 / DSM 20160 / JCM 8729 / LMG 6399 / NBRC 3181 / NCIMB 6459 / NCDO 1258 / NCTC 12367 / WDCM 00089 / R)).